The primary structure comprises 893 residues: Flippase kinase 1 (893 aa).

A compositionally biased stretch (basic and acidic residues) spans 1–23; it reads MAGHHHEHEQERDHEQEHEHDSL. 3 disordered regions span residues 1 to 124, 129 to 148, and 163 to 243; these read MAGH…SSKL, PMTSVANASPASPPLSPTIP, and QHEH…ERAG. A compositionally biased stretch (polar residues) spans 24–42; it reads QRPTTGSERTRSISFSKLL. Over residues 49 to 62 the composition is skewed to low complexity; it reads NASSSNNMSVSSVN. The span at 76 to 87 shows a compositional bias: polar residues; the sequence is NNSGSEGQSSRF. Residues 96–122 show a composition bias toward low complexity; that stretch reads SGNSSKNASAHNSSQSSLEGDSASSSS. Phosphoserine is present on residues serine 140, serine 144, serine 171, serine 175, and serine 185. The span at 206 to 216 shows a compositional bias: low complexity; it reads SQNSNNSSSTS. Residues 228 to 237 are compositionally biased toward polar residues; that stretch reads GSQGFSSNNP. Serine 300 carries the phosphoserine modification. Over residues 334–355 the composition is skewed to polar residues; that stretch reads DTLNGSPSRGSSKSPTITQTFP. A disordered region spans residues 334–480; the sequence is DTLNGSPSRG…PRRSRRLRTK (147 aa). Over residues 370–380 the composition is skewed to basic and acidic residues; that stretch reads NNDKHDEKEEQ. Polar residues predominate over residues 381–399; the sequence is QTTTDNKTRNLSPTKQNGK. Serine 414 carries the phosphoserine modification. Low complexity predominate over residues 422–439; that stretch reads ASATSPTSSSARKTSGSS. Serine 462 is modified (phosphoserine). The 282-residue stretch at 496-777 folds into the Protein kinase domain; sequence FEKIRLLGQG…AADVKKHPFF (282 aa). ATP contacts are provided by residues 502-510 and lysine 525; that span reads LGQGDVGKV. Aspartate 621 (proton acceptor) is an active-site residue. Positions 778 to 861 constitute an AGC-kinase C-terminal domain; it reads KKVQWSLLRN…MSLMEQDNNS (84 aa). The segment at 874–893 is disordered; the sequence is AYTPNSNRSRSNSHRTFFKR. Positions 884 to 893 are enriched in basic residues; the sequence is SNSHRTFFKR.

It belongs to the protein kinase superfamily. Ser/Thr protein kinase family. KIN82 subfamily. Post-translationally, the N-terminal non-catalytic domain is phosphorylated by YPK1.

It localises to the cytoplasm. It is found in the cell membrane. It carries out the reaction L-seryl-[protein] + ATP = O-phospho-L-seryl-[protein] + ADP + H(+). The enzyme catalyses L-threonyl-[protein] + ATP = O-phospho-L-threonyl-[protein] + ADP + H(+). Its activity is regulated as follows. Down-regulated by YKP1 phosphorylation. This effect is counteracted in the presence of mannosyl-inositolphosphorylceramide (MIPC). Functionally, flippase activator that phosphorylates DNF1 and DNF2 and which is involved in the generation of phospholipid asymmetry in membranes by the inward translocation of phospholipids and in the retrieval pathway from early endosomes to the trans-Golgi network (TGN). Also phosphorylates the N-terminal half of YPK1. Involved in pheromone-response. The chain is Flippase kinase 1 (FPK1) from Saccharomyces cerevisiae (strain ATCC 204508 / S288c) (Baker's yeast).